A 127-amino-acid polypeptide reads, in one-letter code: Anti-adapter protein IraD (127 aa).

This sequence belongs to the GpW/Gp25 family. IraD subfamily. In terms of assembly, interacts with RssB.

It localises to the cytoplasm. Functionally, inhibits RpoS proteolysis by regulating RssB activity, thereby increasing the stability of the sigma stress factor RpoS during oxidative stress. Its effect on RpoS stability is due to its interaction with RssB, which probably blocks the interaction of RssB with RpoS, and the consequent delivery of the RssB-RpoS complex to the ClpXP protein degradation pathway. This Escherichia coli O127:H6 (strain E2348/69 / EPEC) protein is Anti-adapter protein IraD.